A 121-amino-acid polypeptide reads, in one-letter code: MARIAGVDVPREKRVVIALTYIYGIGRTSAQKILAEANVSEDTRVRDLTEDELGRIREIVDGYKVEGDLRREVNLNIKRLMEIASYRGIRHRRGLPTRGQNTKNNARTRKGPVKTVANKKK.

The interval 91–121 (HRRGLPTRGQNTKNNARTRKGPVKTVANKKK) is disordered. A compositionally biased stretch (basic residues) spans 106-121 (ARTRKGPVKTVANKKK).

The protein belongs to the universal ribosomal protein uS13 family. Part of the 30S ribosomal subunit. Forms a loose heterodimer with protein S19. Forms two bridges to the 50S subunit in the 70S ribosome.

Its function is as follows. Located at the top of the head of the 30S subunit, it contacts several helices of the 16S rRNA. In the 70S ribosome it contacts the 23S rRNA (bridge B1a) and protein L5 of the 50S subunit (bridge B1b), connecting the 2 subunits; these bridges are implicated in subunit movement. Contacts the tRNAs in the A and P-sites. The sequence is that of Small ribosomal subunit protein uS13 from Macrococcus caseolyticus (strain JCSC5402) (Macrococcoides caseolyticum).